The primary structure comprises 433 residues: MMIYSITPPHRLRGIIDLPGDKSISHRAILLNAVAAGSAEITNFLTGADCLSTIACVQALGVHIERQGTTVRVDGAGLRGLREPVDVLDCGNSGTTLRLLAGMIAGQEGMFAVLTGDSSLRSRPQQRIVAPLRALGASLDGRQQGNCAPLAVRGAHLHGGAYELPIASAQVKSALLLAALFGDAPLTLTGRTDGRDHTERMLAAMGVEITVNTPVIRLTPPAHSDALRPLSLRAPGDPSSAAFWWVAAAIHPDAELTTTGVCLNPTRTGALDALRAMGAQIEVTNQRIEGSEPVGDVTVRSSQLRGITIEGALIPRLIDELPVLALAAACAEGETIIRDAQELRVKETDRIATAASGLTALGATVEPTSDGMVISGGARLRGASLDSHGDHRLAMTWAIAGLVASGETTLRGAGAVDVSYPEFWGVLARVAER.

The 3-phosphoshikimate site is built by Lys-22, Ser-23, and Arg-27. Lys-22 provides a ligand contact to phosphoenolpyruvate. The phosphoenolpyruvate site is built by Gly-94 and Arg-123. Positions 168, 170, 319, and 346 each coordinate 3-phosphoshikimate. Gln-170 contacts phosphoenolpyruvate. Catalysis depends on Asp-319, which acts as the Proton acceptor. Phosphoenolpyruvate-binding residues include Arg-350 and Arg-392.

Belongs to the EPSP synthase family. In terms of assembly, monomer.

It localises to the cytoplasm. It carries out the reaction 3-phosphoshikimate + phosphoenolpyruvate = 5-O-(1-carboxyvinyl)-3-phosphoshikimate + phosphate. Its pathway is metabolic intermediate biosynthesis; chorismate biosynthesis; chorismate from D-erythrose 4-phosphate and phosphoenolpyruvate: step 6/7. Functionally, catalyzes the transfer of the enolpyruvyl moiety of phosphoenolpyruvate (PEP) to the 5-hydroxyl of shikimate-3-phosphate (S3P) to produce enolpyruvyl shikimate-3-phosphate and inorganic phosphate. The chain is 3-phosphoshikimate 1-carboxyvinyltransferase from Roseiflexus sp. (strain RS-1).